Here is a 406-residue protein sequence, read N- to C-terminus: B3 domain-containing protein Os11g0197600 (406 aa).

The interval methionine 1 to glutamate 20 is disordered. A DNA-binding region (TF-B3 1) is located at residues arginine 30 to serine 123. Positions glutamate 199–leucine 245 are disordered. The span at lysine 214–glycine 225 shows a compositional bias: polar residues. The segment at residues alanine 298–valine 393 is a DNA-binding region (TF-B3 2).

Its subcellular location is the nucleus. This chain is B3 domain-containing protein Os11g0197600, found in Oryza sativa subsp. japonica (Rice).